A 129-amino-acid polypeptide reads, in one-letter code: 8-oxo-dGTP diphosphatase (129 aa).

The Nudix hydrolase domain maps to 1-129; that stretch reads MKKLQIAVGI…EPVIAKLKRL (129 aa). Residues Arg-23, His-28, and 34-37 contribute to the 8-oxo-dGTP site; that span reads EFPG. Residues Gly-37 and Glu-57 each coordinate Mg(2+). Positions 38-59 match the Nudix box motif; sequence GKIEMGETPEQAVVRELQEEVG. Asn-119 is an 8-oxo-dGTP binding site.

Belongs to the Nudix hydrolase family. Monomer. Mg(2+) is required as a cofactor.

It catalyses the reaction 8-oxo-dGTP + H2O = 8-oxo-dGMP + diphosphate + H(+). The catalysed reaction is 8-oxo-GTP + H2O = 8-oxo-GMP + diphosphate + H(+). It carries out the reaction 8-oxo-dGDP + H2O = 8-oxo-dGMP + phosphate + H(+). The enzyme catalyses 8-oxo-GDP + H2O = 8-oxo-GMP + phosphate + H(+). Specifically hydrolyzes both 8-oxo-deoxyguanosine triphosphate (8-oxo-dGTP) and 8-oxo-guanosine triphosphate (8-oxo-GTP) to the related monophosphates, thereby cleaning up the nucleotide pools and preventing misincorporation of 8-oxoGua into DNA and RNA. It prevents replicational errors by removing an oxidatively damaged form of guanine (8-oxo-dGTP) from DNA and the nucleotide pool. 8-oxo-dGTP can be inserted opposite dA and dC residues of template DNA with almost equal efficiency thus leading to A.T to G.C transversions. MutT may also ensure transcriptional fidelity, removing 8-oxo-GTP from the ribonucleotide triphosphate pool. However, due to the lower efficiency of RNA polymerase 8-oxo-GTP incorporation, MutT is probably not a major contributor to transcriptional fidelity. It also hydrolyzes 8-oxo-dGDP and 8-oxo-GDP to their monophosphate form. In vitro, can also use dGTP, dGDP and other various nucleoside di- and triphosphates, with much lower efficiency. Works cooperatively with MutM and MutY to prevent accumulation in the DNA of oxidized guanine residues. The chain is 8-oxo-dGTP diphosphatase from Escherichia coli (strain K12).